Here is a 378-residue protein sequence, read N- to C-terminus: Putative glutamate--cysteine ligase 2 (378 aa).

Belongs to the glutamate--cysteine ligase type 2 family. YbdK subfamily.

The catalysed reaction is L-cysteine + L-glutamate + ATP = gamma-L-glutamyl-L-cysteine + ADP + phosphate + H(+). Its function is as follows. ATP-dependent carboxylate-amine ligase which exhibits weak glutamate--cysteine ligase activity. This is Putative glutamate--cysteine ligase 2 from Salinispora tropica (strain ATCC BAA-916 / DSM 44818 / JCM 13857 / NBRC 105044 / CNB-440).